The sequence spans 117 residues: UPF0375 protein Y45F10C.2 (117 aa).

The N-terminal stretch at 1–20 (MNSFVSTVLLLSVTIALVSG) is a signal peptide.

The protein belongs to the UPF0375 family. Expressed in the uterine epithelium.

It localises to the secreted. In terms of biological role, negatively regulates the egg-laying rate by promoting retention of fertilized eggs. The protein is UPF0375 protein Y45F10C.2 of Caenorhabditis elegans.